We begin with the raw amino-acid sequence, 213 residues long: Ribosomal RNA small subunit methyltransferase G (213 aa).

Residues Gly75, Phe80, 128 to 129 (IE), and Arg144 contribute to the S-adenosyl-L-methionine site.

Belongs to the methyltransferase superfamily. RNA methyltransferase RsmG family.

Its subcellular location is the cytoplasm. The catalysed reaction is guanosine(527) in 16S rRNA + S-adenosyl-L-methionine = N(7)-methylguanosine(527) in 16S rRNA + S-adenosyl-L-homocysteine. In terms of biological role, specifically methylates the N7 position of guanine in position 527 of 16S rRNA. The polypeptide is Ribosomal RNA small subunit methyltransferase G (Brucella suis biovar 1 (strain 1330)).